Reading from the N-terminus, the 219-residue chain is Large ribosomal subunit protein uL4 (219 aa).

The tract at residues 43–101 (AAARQGTHKTKRRGEVRGGGKKPYRQKGTGRARQGSTRAPQFAGGGVVHGPQPRDYSQR) is disordered. The span at 61–72 (GGKKPYRQKGTG) shows a compositional bias: basic residues.

This sequence belongs to the universal ribosomal protein uL4 family. In terms of assembly, part of the 50S ribosomal subunit.

Its function is as follows. One of the primary rRNA binding proteins, this protein initially binds near the 5'-end of the 23S rRNA. It is important during the early stages of 50S assembly. It makes multiple contacts with different domains of the 23S rRNA in the assembled 50S subunit and ribosome. Functionally, forms part of the polypeptide exit tunnel. The protein is Large ribosomal subunit protein uL4 of Streptomyces coelicolor (strain ATCC BAA-471 / A3(2) / M145).